The primary structure comprises 61 residues: Photosystem II reaction center protein K (61 aa).

Residues M1–A24 constitute a propeptide that is removed on maturation. The helical transmembrane segment at M40–F60 threads the bilayer.

The protein belongs to the PsbK family. PSII is composed of 1 copy each of membrane proteins PsbA, PsbB, PsbC, PsbD, PsbE, PsbF, PsbH, PsbI, PsbJ, PsbK, PsbL, PsbM, PsbT, PsbX, PsbY, PsbZ, Psb30/Ycf12, at least 3 peripheral proteins of the oxygen-evolving complex and a large number of cofactors. It forms dimeric complexes.

It is found in the plastid. The protein localises to the chloroplast thylakoid membrane. Functionally, one of the components of the core complex of photosystem II (PSII). PSII is a light-driven water:plastoquinone oxidoreductase that uses light energy to abstract electrons from H(2)O, generating O(2) and a proton gradient subsequently used for ATP formation. It consists of a core antenna complex that captures photons, and an electron transfer chain that converts photonic excitation into a charge separation. This chain is Photosystem II reaction center protein K, found in Citrus sinensis (Sweet orange).